The following is a 135-amino-acid chain: Probable disulfide formation protein (135 aa).

A helical membrane pass occupies residues 7 to 26 (SYCLYLAWLFSCIGTLMSVY). A disulfide bridge links cysteine 36 with cysteine 39. A run of 2 helical transmembrane segments spans residues 41–60 (YQRI…AYRE) and 67–84 (YTLP…YQVC). Cysteine 96 and cysteine 101 are oxidised to a cystine. The chain crosses the membrane as a helical span at residues 109–131 (GFITMPMASAAAFCAIACLLVLA).

This sequence belongs to the DsbB family. BdbC subfamily.

The protein resides in the cell inner membrane. Required for disulfide bond formation in some proteins. The polypeptide is Probable disulfide formation protein (Chlamydia trachomatis serovar D (strain ATCC VR-885 / DSM 19411 / UW-3/Cx)).